Reading from the N-terminus, the 1226-residue chain is Chromosome partition protein Smc (1226 aa).

32 to 39 (PNGCGKSN) provides a ligand contact to ATP. 2 coiled-coil regions span residues 173–231 (ITKF…IKRN) and 269–491 (NSLE…SKSL). In terms of domain architecture, SMC hinge spans 527–635 (YQLLGNLIQC…FDGYFIASKF (109 aa)). Coiled coils occupy residues 679–741 (QGVV…AAKK), 775–965 (MLES…LREA), and 1006–1078 (HRRY…KSKE).

It belongs to the SMC family. As to quaternary structure, homodimer.

The protein localises to the cytoplasm. Functionally, required for chromosome condensation and partitioning. The protein is Chromosome partition protein Smc of Halobacteriovorax marinus (strain ATCC BAA-682 / DSM 15412 / SJ) (Bacteriovorax marinus).